Reading from the N-terminus, the 589-residue chain is Muscarinic acetylcholine receptor M3 (589 aa).

At 1-66 (MTLHSNSTTS…DPLGGHTIWQ (66 aa)) the chain is on the extracellular side. Residues N6, N15, N41, N48, and N52 are each glycosylated (N-linked (GlcNAc...) asparagine). Residues 67-90 (VVFIAFLTGFLALVTIIGNILVIV) form a helical membrane-spanning segment. The Cytoplasmic portion of the chain corresponds to 91–103 (AFKVNKQLKTVNN). The chain crosses the membrane as a helical span at residues 104–129 (YFLLSLACADLIIGVISMNLFTTYII). Residues 130–141 (MNRWALGNLACD) are Extracellular-facing. C140 and C220 are joined by a disulfide. Residues 142 to 163 (LWLSIDYVASNASVMNLLVISF) traverse the membrane as a helical segment. Residues 164 to 183 (DRYFSITRPLTYRAKRTTKR) are Cytoplasmic-facing. Residues 184 to 205 (AGVMIGLAWVISFVLWAPAILF) form a helical membrane-spanning segment. Over 206–228 (WQYFVGKRTVPPGECFIQFLSEP) the chain is Extracellular. Residues 229 to 251 (TITFGTAIAAFYMPVTIMTILYW) form a helical membrane-spanning segment. The Cytoplasmic portion of the chain corresponds to 252 to 490 (RIYKETEKRT…SLIKEKKAAQ (239 aa)). Residues 274–280 (AEAENFV) carry the Basolateral sorting signal motif. 2 disordered regions span residues 275–295 (EAEN…YELQ) and 323–356 (AEQM…EEDI). Residues 283-295 (TGSSRSCSSYELQ) are compositionally biased toward polar residues. Residues 333–344 (SDSWNNNDAAAS) show a composition bias toward low complexity. S384 bears the Phosphoserine mark. A helical membrane pass occupies residues 491–513 (TLSAILLAFIITWTPYNIMVLVN). Residues 514-525 (TFCDSCIPKTYW) lie on the Extracellular side of the membrane. An intrachain disulfide couples C516 to C519. The chain crosses the membrane as a helical span at residues 526-545 (NLGYWLCYINSTVNPVCYAL). Residues 546–589 (CNKTFRTTFKMLLLCQCDKRKRRKQQYQQRQSVIFHKRVPEQAL) lie on the Cytoplasmic side of the membrane.

The protein belongs to the G-protein coupled receptor 1 family. Muscarinic acetylcholine receptor subfamily. CHRM3 sub-subfamily. In terms of assembly, homodimer; the dimers can form tetramers. Interacts with NALCN. Interacts with TMEM147. Expressed in cerebral cortex, submandibular gland, hypothalamus, pancreas, liver, and ileum.

It localises to the cell membrane. Its subcellular location is the postsynaptic cell membrane. The protein resides in the basolateral cell membrane. The protein localises to the endoplasmic reticulum membrane. Functionally, the muscarinic acetylcholine receptor mediates various cellular responses, including inhibition of adenylate cyclase, breakdown of phosphoinositides and modulation of potassium channels through the action of G proteins. Primary transducing effect is Pi turnover. The protein is Muscarinic acetylcholine receptor M3 (Chrm3) of Mus musculus (Mouse).